Reading from the N-terminus, the 96-residue chain is Co-chaperonin GroES (96 aa).

It belongs to the GroES chaperonin family. In terms of assembly, heptamer of 7 subunits arranged in a ring. Interacts with the chaperonin GroEL.

It is found in the cytoplasm. Its function is as follows. Together with the chaperonin GroEL, plays an essential role in assisting protein folding. The GroEL-GroES system forms a nano-cage that allows encapsulation of the non-native substrate proteins and provides a physical environment optimized to promote and accelerate protein folding. GroES binds to the apical surface of the GroEL ring, thereby capping the opening of the GroEL channel. This is Co-chaperonin GroES from Syntrophomonas wolfei subsp. wolfei (strain DSM 2245B / Goettingen).